The sequence spans 442 residues: Thymidine phosphorylase (442 aa).

Belongs to the thymidine/pyrimidine-nucleoside phosphorylase family. In terms of assembly, homodimer.

It carries out the reaction thymidine + phosphate = 2-deoxy-alpha-D-ribose 1-phosphate + thymine. The protein operates within pyrimidine metabolism; dTMP biosynthesis via salvage pathway; dTMP from thymine: step 1/2. The enzymes which catalyze the reversible phosphorolysis of pyrimidine nucleosides are involved in the degradation of these compounds and in their utilization as carbon and energy sources, or in the rescue of pyrimidine bases for nucleotide synthesis. This Vibrio vulnificus (strain CMCP6) protein is Thymidine phosphorylase.